Reading from the N-terminus, the 219-residue chain is MGQKINPLGFRLGTTQSHHSLWFAKPKNYCEGLQEDQKIRNFIKNYIKKNIRISSGVEGIARIEIQKRIDLIQVIIYIGFPKLLLENRPRRIEELQMNVQKELNCVNRKINIAITRITNPYGHPNILAEFIAGQLKNRVSFRKAMKKAIELTEQADTKGIQVQIAGRLDGKEIARAEWIREGRVPLQTIGAKIDYCSYTVRTIYGVLGIKIWIFVDEKK.

Positions 47–118 (IKKNIRISSG…KINIAITRIT (72 aa)) constitute a KH type-2 domain.

This sequence belongs to the universal ribosomal protein uS3 family. Part of the 30S ribosomal subunit.

The protein localises to the plastid. It localises to the chloroplast. In Citrus sinensis (Sweet orange), this protein is Small ribosomal subunit protein uS3c (rps3).